A 398-amino-acid polypeptide reads, in one-letter code: S-adenosylmethionine synthase (398 aa).

His16 contributes to the ATP binding site. Position 18 (Asp18) interacts with Mg(2+). Glu44 contacts K(+). L-methionine-binding residues include Glu57 and Gln100. A flexible loop region spans residues 100–110 (QSPDIAQGVNE). ATP-binding positions include 175-177 (DAK), 242-243 (RF), Asp251, 257-258 (RK), Ala274, and Lys278. Asp251 contacts L-methionine. Lys282 serves as a coordination point for L-methionine.

Belongs to the AdoMet synthase family. In terms of assembly, homotetramer; dimer of dimers. The cofactor is Mg(2+). It depends on K(+) as a cofactor.

The protein localises to the cytoplasm. The catalysed reaction is L-methionine + ATP + H2O = S-adenosyl-L-methionine + phosphate + diphosphate. The protein operates within amino-acid biosynthesis; S-adenosyl-L-methionine biosynthesis; S-adenosyl-L-methionine from L-methionine: step 1/1. Catalyzes the formation of S-adenosylmethionine (AdoMet) from methionine and ATP. The overall synthetic reaction is composed of two sequential steps, AdoMet formation and the subsequent tripolyphosphate hydrolysis which occurs prior to release of AdoMet from the enzyme. This Streptococcus agalactiae serotype Ia (strain ATCC 27591 / A909 / CDC SS700) protein is S-adenosylmethionine synthase.